The following is a 201-amino-acid chain: MELVLKDAQSALEVSETTFGRDFNEALVHQVVVAYAANARQGTRAQKTRAEVTGSGKKPWRQKGTGRARAGGVKGPIWRGGGVTFAAKTQDHSQKVNKKMYRGALKSILSELVRQDRLVVVESFSVEAPKTKELKAKLKAMNLEDVLIVTSEVDENLFLAARNLYKVDVRDVAGLDPVSLIAFNTVLVTADAVKQIEEMLA.

The segment at Ala45 to Gly71 is disordered.

It belongs to the universal ribosomal protein uL4 family. As to quaternary structure, part of the 50S ribosomal subunit.

In terms of biological role, one of the primary rRNA binding proteins, this protein initially binds near the 5'-end of the 23S rRNA. It is important during the early stages of 50S assembly. It makes multiple contacts with different domains of the 23S rRNA in the assembled 50S subunit and ribosome. Its function is as follows. Forms part of the polypeptide exit tunnel. The chain is Large ribosomal subunit protein uL4 from Shewanella oneidensis (strain ATCC 700550 / JCM 31522 / CIP 106686 / LMG 19005 / NCIMB 14063 / MR-1).